The sequence spans 162 residues: Beta-carotene hydroxylase (162 aa).

The region spanning 8 to 135 (VATVLVMELT…GRDHCVSFGF (128 aa)) is the Fatty acid hydroxylase domain.

Belongs to the sterol desaturase family.

It carries out the reaction all-trans-beta-carotene + 4 reduced [2Fe-2S]-[ferredoxin] + 2 O2 + 4 H(+) = all-trans-zeaxanthin + 4 oxidized [2Fe-2S]-[ferredoxin] + 2 H2O. It functions in the pathway carotenoid biosynthesis; astaxanthin biosynthesis. Its function is as follows. Catalyzes the hydroxylation reaction from beta-carotene to zeaxanthin via beta-cryptoxanthin. This chain is Beta-carotene hydroxylase (crtZ), found in Paracoccus sp. (strain PC1) (Alcaligenes sp. (strain PC1)).